Reading from the N-terminus, the 613-residue chain is MLFRGLSLWMLFLASCLSALALPAAEDDGSVKVFKRAKKHSTKQEGPSYAPYYVDCPSDNIVESLSSNEIPSAESEYLSTRSTITNTAMKDFLRNANLPGLNADTLSGSEGPSIGIALSGGGLRAMILGSGALSAMDARHDNHTVLTGLLQASDYLVGTDGSAWTVGGIALNNFSTINDFSKLWAFNHPLMYPKSAIVFNAHFYSSIMNEVAEKANAGFNISLSDYWGRVISRTLGDTTYGFPNVSLSSITSQEWYRNANFPYPIITFATQNYGEDISNVNTTFFEASPNVFGTFDHGINSFIPTEYLGTTLNNGASSNGSCVINYDNFGFMMGASSTYFNKIMRNFNDSSTKNGRIIQQYLKGNFSENGQQIISIPNPFQGVESANSDAANNLGSSSSLNLVDTFLTGEKIPLWPLLQKGRDVDVIVAVDNGDDSEWLWPNGNSLVQTYERVVAAQAAGNTNVKGFPYVPSQQSFVSLHFNDRPVFFGCDGRNTTAGNHTVTRDTPPLVIYLPNVPYNYFTNISTDRTYYTEDMIQQLLTNGLISSTVDNDTYFGQCFACAVVKRTLERNNITASPECQQCYYNYCWSGLYDDSAANDDIVYNPTCRLGEGI.

Residues 1 to 21 (MLFRGLSLWMLFLASCLSALA) form the signal peptide. The region spanning 55–593 (DCPSDNIVES…YNYCWSGLYD (539 aa)) is the PLA2c domain. Residues Asn-142, Asn-173, Asn-220, Asn-244, Asn-281, Asn-319, Asn-348, Asn-365, Asn-494, Asn-499, Asn-523, Asn-551, and Asn-572 are each glycosylated (N-linked (GlcNAc...) asparagine).

The protein belongs to the lysophospholipase family.

The protein resides in the secreted. The catalysed reaction is a 1-acyl-sn-glycero-3-phosphocholine + H2O = sn-glycerol 3-phosphocholine + a fatty acid + H(+). In terms of biological role, catalyzes the release of fatty acids from lysophospholipids. Required for survival under high osmolarity, for normal osmotic stress-induced gene expression, and for nutrient-mediated repression of sexual differentiation. This is Lysophospholipase 1 (plb1) from Schizosaccharomyces pombe (strain 972 / ATCC 24843) (Fission yeast).